Here is a 216-residue protein sequence, read N- to C-terminus: Protein-L-isoaspartate O-methyltransferase 1 (216 aa).

S60 is a catalytic residue.

This sequence belongs to the methyltransferase superfamily. L-isoaspartyl/D-aspartyl protein methyltransferase family.

It is found in the cytoplasm. The catalysed reaction is [protein]-L-isoaspartate + S-adenosyl-L-methionine = [protein]-L-isoaspartate alpha-methyl ester + S-adenosyl-L-homocysteine. Its function is as follows. Catalyzes the methyl esterification of L-isoaspartyl residues in peptides and proteins that result from spontaneous decomposition of normal L-aspartyl and L-asparaginyl residues. It plays a role in the repair and/or degradation of damaged proteins. The sequence is that of Protein-L-isoaspartate O-methyltransferase 1 (pcm1) from Archaeoglobus fulgidus (strain ATCC 49558 / DSM 4304 / JCM 9628 / NBRC 100126 / VC-16).